Consider the following 349-residue polypeptide: GTPase Obg (349 aa).

An Obg domain is found at 1 to 159 (MKFLDQAKVY…LWIWLRLKLI (159 aa)). The region spanning 160-327 (ADAGLIGLPN…VLRALMRVVQ (168 aa)) is the OBG-type G domain. Residues 166 to 173 (GLPNAGKS), 191 to 195 (FTTLH), 212 to 215 (DIPG), 279 to 282 (SQID), and 308 to 310 (SSA) contribute to the GTP site. Mg(2+) is bound by residues Ser-173 and Thr-193.

It belongs to the TRAFAC class OBG-HflX-like GTPase superfamily. OBG GTPase family. In terms of assembly, monomer. Mg(2+) is required as a cofactor.

The protein localises to the cytoplasm. Functionally, an essential GTPase which binds GTP, GDP and possibly (p)ppGpp with moderate affinity, with high nucleotide exchange rates and a fairly low GTP hydrolysis rate. Plays a role in control of the cell cycle, stress response, ribosome biogenesis and in those bacteria that undergo differentiation, in morphogenesis control. The protein is GTPase Obg of Chelativorans sp. (strain BNC1).